The following is a 216-amino-acid chain: Small ribosomal subunit protein uS5 (216 aa).

Positions 1–55 (MDRKLENQKDLLNQDPKVELNSQSVAKNPLNSREVKPIQRRRPLRKNSRDKNSKP) are disordered. Residues 20 to 31 (LNSQSVAKNPLN) are compositionally biased toward polar residues. Positions 57–120 (FEERVIAIHR…KDAQNRLVSV (64 aa)) constitute an S5 DRBM domain.

It belongs to the universal ribosomal protein uS5 family. In terms of assembly, part of the 30S ribosomal subunit. Contacts proteins S4 and S8.

Functionally, with S4 and S12 plays an important role in translational accuracy. In terms of biological role, located at the back of the 30S subunit body where it stabilizes the conformation of the head with respect to the body. The chain is Small ribosomal subunit protein uS5 from Mesomycoplasma hyopneumoniae (strain J / ATCC 25934 / NCTC 10110) (Mycoplasma hyopneumoniae).